Reading from the N-terminus, the 413-residue chain is Alpha-1-antitrypsin 1-5 (413 aa).

Positions Met-1–Ala-24 are cleaved as a signal peptide. N-linked (GlcNAc...) asparagine glycosylation is found at Asn-64, Asn-101, and Asn-265. Residues Ala-368–Arg-387 form an RCL region.

It belongs to the serpin family.

The protein localises to the secreted. Its function is as follows. Does not inhibit elastase or chymotrypsin. No target protease has been identified to date. This is Alpha-1-antitrypsin 1-5 (Serpina1e) from Mus musculus (Mouse).